The chain runs to 151 residues: 3-hydroxyacyl-[acyl-carrier-protein] dehydratase FabZ (151 aa).

Histidine 49 is a catalytic residue.

The protein belongs to the thioester dehydratase family. FabZ subfamily.

The protein resides in the cytoplasm. It carries out the reaction a (3R)-hydroxyacyl-[ACP] = a (2E)-enoyl-[ACP] + H2O. Involved in unsaturated fatty acids biosynthesis. Catalyzes the dehydration of short chain beta-hydroxyacyl-ACPs and long chain saturated and unsaturated beta-hydroxyacyl-ACPs. This is 3-hydroxyacyl-[acyl-carrier-protein] dehydratase FabZ from Bordetella parapertussis (strain 12822 / ATCC BAA-587 / NCTC 13253).